A 136-amino-acid chain; its full sequence is Large-conductance mechanosensitive channel (136 aa).

A run of 4 helical transmembrane segments spans residues 9-29 (AFAS…GAAF), 32-52 (IVSS…LGGV), 54-74 (FSDL…VVIA), and 79-99 (IQTV…LKAI).

It belongs to the MscL family. In terms of assembly, homopentamer.

The protein localises to the cell inner membrane. Its function is as follows. Channel that opens in response to stretch forces in the membrane lipid bilayer. May participate in the regulation of osmotic pressure changes within the cell. In Vibrio cholerae serotype O1 (strain ATCC 39541 / Classical Ogawa 395 / O395), this protein is Large-conductance mechanosensitive channel.